The following is a 325-amino-acid chain: GTP 3',8-cyclase (325 aa).

Residues 4–219 (TYQREINYLR…DAISAKLGPL (216 aa)) form the Radical SAM core domain. Arginine 13 is a binding site for GTP. Cysteine 20 and cysteine 24 together coordinate [4Fe-4S] cluster. An S-adenosyl-L-methionine-binding site is contributed by tyrosine 26. Cysteine 27 serves as a coordination point for [4Fe-4S] cluster. GTP is bound at residue arginine 63. Glycine 67 provides a ligand contact to S-adenosyl-L-methionine. Threonine 94 lines the GTP pocket. An S-adenosyl-L-methionine-binding site is contributed by serine 118. GTP is bound at residue lysine 155. Methionine 189 contributes to the S-adenosyl-L-methionine binding site. Residues cysteine 254 and cysteine 257 each contribute to the [4Fe-4S] cluster site. 259 to 261 (RLR) is a GTP binding site. Cysteine 271 is a binding site for [4Fe-4S] cluster.

The protein belongs to the radical SAM superfamily. MoaA family. As to quaternary structure, monomer and homodimer. The cofactor is [4Fe-4S] cluster.

It catalyses the reaction GTP + AH2 + S-adenosyl-L-methionine = (8S)-3',8-cyclo-7,8-dihydroguanosine 5'-triphosphate + 5'-deoxyadenosine + L-methionine + A + H(+). Its pathway is cofactor biosynthesis; molybdopterin biosynthesis. Catalyzes the cyclization of GTP to (8S)-3',8-cyclo-7,8-dihydroguanosine 5'-triphosphate. The sequence is that of GTP 3',8-cyclase from Pelotomaculum thermopropionicum (strain DSM 13744 / JCM 10971 / SI).